The chain runs to 647 residues: MAAEWGGGVGYSGSGPGRSRWRWSGSVWVRSVLLLLGGLRASATSTPVSLGSSPPCRHHVPSDTEVINKVHLKANHVVKRDVDEHLRIKTVYDKSVEELLPEKKNLVKNKLFPQAISYLEKTFQVRRPAGTILLSRQCATNQYLRKENDPHRYCTGECAAHTKCGPVIVPEEHLQQCRVYRGGKWPHGAVGVPDQEGISDADFVLYVGALATERCSHENIISYAAYCQQEANMDRPIAGYANLCPNMISTQPQEFVGMLSTVKHEVIHALGFSAGLFAFYHDKDGNPLTSRFADGLPPFNYSLGLYQWSDKVVRKVERLWDVRDNKIVRHTVYLLVTPRVVEEARKHFDCPVLEGMELENQGGVGTELNHWEKRLLENEAMTGSHTQNRVLSRITLALMEDTGRQMLSPYCDTLRSNPLQLTCRQDQRAVAVCNLQKFPKPLPQEYQYFDELSGIPAEDLPYYGGSVEIADYCPFSQEFSWHLSGEYQRSSDCRILENQPEIFKNYGAEKYGPHSVCLIQKSAFVMEKCERKLSYPDWGSGCYQVSCSPQGLKVWVQDTSYLCSRAGQVLPVSIQMNGWIHDGNLLCPSCWDFCELCPPETDPPATNLTRALPLDLCSCSSSLVVTLWLLLGNLFPLLAGFLLCIWH.

Residue His-264 participates in Zn(2+) binding. Residue Glu-265 is part of the active site. Zn(2+) is bound by residues His-268 and His-370.

It belongs to the peptidase M8 family. Zn(2+) is required as a cofactor. As to expression, expressed in all cell lines analyzed.

It is found in the cytoplasm. Its subcellular location is the lipid droplet. Metalloprotease. This chain is Leishmanolysin-like peptidase (LMLN), found in Homo sapiens (Human).